Reading from the N-terminus, the 594-residue chain is MRAGRGGVPGSGGLRAPPPPLLLLLLAMLPAAAPRSPALAAAPAGPSVSLYLSEDEVRRLLGLDAELYYVRNDLISHYALSFNLLVPSETNFLHFTWHAKSKVEYKLGFQVDNFVAMGMPQVNISAQGEVPRTLSVFRVELSCTGKVDSEVMILMQLNLTVNSSKNFTVLNFKRRKMCYKKLEEVKTSALDKNTSRTIYDPVHAAPTTSTRVFYISVGVCCAVIFLVAIILAVLHLHSMKRIELDDSISASSSSQGLSQPSTQTTQYLRADTPNNATPITSSSGYPTLRIEKNDLRSVTLLEAKAKVKDIAISRERITLKDVLQEGTFGRIFHGILVDEKDPNKEKQTFVKTVKDQASEVQVTMMLTESCKLRGLHHRNLLPITHVCIEEGEKPMVVLPYMNWGNLKLFLRQCKLVEANNPQAISQQDLVHMAIQIACGMSYLARREVIHRDLAARNCVIDDTLQVKITDNALSRDLFPMDYHCLGDNENRPVRWMALESLVNNEFSSASDVWAFGVTLWELMTLGQTPYVDIDPFEMAAYLKDGYRIAQPINCPDELFAVMACCWALDPEERPKFQQLVQCLTEFHAALGAYV.

The first 34 residues, 1-34 (MRAGRGGVPGSGGLRAPPPPLLLLLLAMLPAAAP), serve as a signal peptide directing secretion. Over 35–211 (RSPALAAAPA…VHAAPTTSTR (177 aa)) the chain is Extracellular. A WIF domain is found at 50-178 (LYLSEDEVRR…VLNFKRRKMC (129 aa)). N-linked (GlcNAc...) asparagine glycosylation is found at asparagine 123, asparagine 158, asparagine 162, asparagine 166, and asparagine 193. Residues 212–239 (VFYISVGVCCAVIFLVAIILAVLHLHSM) form a helical membrane-spanning segment. Topologically, residues 240–594 (KRIELDDSIS…EFHAALGAYV (355 aa)) are cytoplasmic. Residues 250–266 (ASSSSQGLSQPSTQTTQ) are compositionally biased toward low complexity. The segment at 250–283 (ASSSSQGLSQPSTQTTQYLRADTPNNATPITSSS) is disordered. Residues 272–283 (TPNNATPITSSS) are compositionally biased toward polar residues. Positions 317–590 (ITLKDVLQEG…QCLTEFHAAL (274 aa)) constitute a Protein kinase domain. Residues 323–331 (LQEGTFGRI) and lysine 351 each bind ATP. Aspartate 452 serves as the catalytic Proton acceptor. Residue tyrosine 482 is modified to Phosphotyrosine; by autocatalysis.

It belongs to the protein kinase superfamily. Tyr protein kinase family. In terms of assembly, interacts with DVL1 (via PDZ domain). Proteolytically cleaved, in part by presenilin, in response to WNT3 stimulation. In terms of tissue distribution, is detected in all the tissues. Highest levels are seen in the ovary, lung and placenta.

The protein resides in the membrane. It is found in the nucleus. The protein localises to the cytoplasm. The catalysed reaction is L-tyrosyl-[protein] + ATP = O-phospho-L-tyrosyl-[protein] + ADP + H(+). Functionally, may be a coreceptor along with FZD8 of Wnt proteins, such as WNT1, WNT3, WNT3A and WNT5A. Involved in neuron differentiation, axon guidance, corpus callosum establishment and neurite outgrowth. In response to WNT3 stimulation, receptor C-terminal cleavage occurs in its transmembrane region and allows the C-terminal intracellular product to translocate from the cytoplasm to the nucleus where it plays a crucial role in neuronal development. The chain is Tyrosine-protein kinase RYK (Ryk) from Mus musculus (Mouse).